The primary structure comprises 617 residues: ATP-dependent rRNA helicase SPB4 (617 aa).

A Q motif motif is present at residues 10 to 38; it reads WKNLQYDLQPWIKEAIASLGFPTMTPVQA. A Helicase ATP-binding domain is found at 41-233; that stretch reads IPLLSGNKDV…RAGMNNPVKV (193 aa). ATP is bound at residue 54–61; sequence AVTGSGKT. A DEAD box motif is present at residues 181-184; that stretch reads DEAD. Positions 261–421 constitute a Helicase C-terminal domain; the sequence is KITTLIKLLH…EMPTPDLNQS (161 aa). A coiled-coil region spans residues 515–585; sequence ADNQQEASRL…EKQIMEESSD (71 aa). The segment at 547 to 617 is disordered; it reads KNEAWSSKTE…GSMQGSFDDL (71 aa). A compositionally biased stretch (basic and acidic residues) spans 555–566; that stretch reads TETKETKQERRE. Positions 608 to 617 are enriched in polar residues; the sequence is GSMQGSFDDL.

Belongs to the DEAD box helicase family. DDX55/SPB4 subfamily. As to quaternary structure, component of pre-60S ribosomal complexes.

It is found in the nucleus. Its subcellular location is the nucleolus. The enzyme catalyses ATP + H2O = ADP + phosphate + H(+). ATP-binding RNA helicase involved in the biogenesis of 60S ribosomal subunits. Binds 90S pre-ribosomal particles and dissociates from pre-60S ribosomal particles after processing of 27SB pre-rRNA. Required for the normal formation of 18S rRNA through the processing of pre-rRNAs at sites A0, A1 and A2, and the normal formation of 25S and 5.8S rRNAs through the processing of pre-rRNAs at sites C1 and C2. In Scheffersomyces stipitis (strain ATCC 58785 / CBS 6054 / NBRC 10063 / NRRL Y-11545) (Yeast), this protein is ATP-dependent rRNA helicase SPB4.